Consider the following 241-residue polypeptide: Fatty acid metabolism regulator protein (241 aa).

In terms of domain architecture, HTH gntR-type spans 11–79 (QSPAGLAEEY…HGKPTKVNNI (69 aa)). Residues 39–58 (ERELAEKIGVTRTTLREVLQ) constitute a DNA-binding region (H-T-H motif).

Homodimer.

The protein localises to the cytoplasm. In terms of biological role, multifunctional regulator of fatty acid metabolism. This is Fatty acid metabolism regulator protein from Pasteurella multocida (strain Pm70).